The primary structure comprises 161 residues: Putative pre-16S rRNA nuclease (161 aa).

Belongs to the YqgF nuclease family.

The protein localises to the cytoplasm. Its function is as follows. Could be a nuclease involved in processing of the 5'-end of pre-16S rRNA. The polypeptide is Putative pre-16S rRNA nuclease (Methylocella silvestris (strain DSM 15510 / CIP 108128 / LMG 27833 / NCIMB 13906 / BL2)).